The following is a 164-amino-acid chain: Cell division protein SepF (164 aa).

The segment at 29 to 57 (INKGRGASQQEYDEYYEDSTPTVTQKEDP) is disordered.

This sequence belongs to the SepF family. In terms of assembly, homodimer. Interacts with FtsZ.

The protein localises to the cytoplasm. Cell division protein that is part of the divisome complex and is recruited early to the Z-ring. Probably stimulates Z-ring formation, perhaps through the cross-linking of FtsZ protofilaments. Its function overlaps with FtsA. The polypeptide is Cell division protein SepF (Exiguobacterium sibiricum (strain DSM 17290 / CCUG 55495 / CIP 109462 / JCM 13490 / 255-15)).